We begin with the raw amino-acid sequence, 234 residues long: Small ribosomal subunit protein uS3 (234 aa).

The region spanning 39–109 is the KH type-2 domain; the sequence is IRTLINKHYG…EVRIAIYEVK (71 aa).

This sequence belongs to the universal ribosomal protein uS3 family. As to quaternary structure, part of the 30S ribosomal subunit. Forms a tight complex with proteins S10 and S14.

Functionally, binds the lower part of the 30S subunit head. Binds mRNA in the 70S ribosome, positioning it for translation. This is Small ribosomal subunit protein uS3 from Coprothermobacter proteolyticus (strain ATCC 35245 / DSM 5265 / OCM 4 / BT).